The following is a 323-amino-acid chain: tRNA dimethylallyltransferase (323 aa).

An ATP-binding site is contributed by 12–19; that stretch reads GPTAAGKT. 14–19 is a binding site for substrate; sequence TAAGKT. Interaction with substrate tRNA regions lie at residues 37–40 and 161–165; these read DSAL and QRLIR.

The protein belongs to the IPP transferase family. As to quaternary structure, monomer. It depends on Mg(2+) as a cofactor.

It carries out the reaction adenosine(37) in tRNA + dimethylallyl diphosphate = N(6)-dimethylallyladenosine(37) in tRNA + diphosphate. In terms of biological role, catalyzes the transfer of a dimethylallyl group onto the adenine at position 37 in tRNAs that read codons beginning with uridine, leading to the formation of N6-(dimethylallyl)adenosine (i(6)A). The protein is tRNA dimethylallyltransferase of Pseudomonas putida (strain W619).